The primary structure comprises 328 residues: DNA-directed RNA polymerase subunit alpha 1 (328 aa).

The segment at 1 to 234 (MQGFVKDFLK…GQLDEFVDER (234 aa)) is alpha N-terminal domain (alpha-NTD). Residues 248–328 (FDPILLRPVN…NWPPASLIED (81 aa)) are alpha C-terminal domain (alpha-CTD).

The protein belongs to the RNA polymerase alpha chain family. As to quaternary structure, homodimer. The RNAP catalytic core consists of 2 alpha, 1 beta, 1 beta' and 1 omega subunit. When a sigma factor is associated with the core the holoenzyme is formed, which can initiate transcription.

The catalysed reaction is RNA(n) + a ribonucleoside 5'-triphosphate = RNA(n+1) + diphosphate. Its function is as follows. DNA-dependent RNA polymerase catalyzes the transcription of DNA into RNA using the four ribonucleoside triphosphates as substrates. The chain is DNA-directed RNA polymerase subunit alpha 1 from Psychromonas ingrahamii (strain DSM 17664 / CCUG 51855 / 37).